Here is a 192-residue protein sequence, read N- to C-terminus: MAVVKSSEIEKGSFLLIKGAPHIVLEREFSKTGRGGAIVRLKLKNLKNKFVIRETLKGADTAEAIEIYEASVQYLYKDKDVLVFMDLETYDQISLDLKENANFQDKVLFLQESEIYSLIMFDNVVIDIKLAPKIAFEVVEVEAAVKGDTVTNAMKNITLNTGLIIKAPLFINVGDKVLVNSETKEYAERIKN.

This sequence belongs to the elongation factor P family.

It localises to the cytoplasm. It participates in protein biosynthesis; polypeptide chain elongation. Involved in peptide bond synthesis. Stimulates efficient translation and peptide-bond synthesis on native or reconstituted 70S ribosomes in vitro. Probably functions indirectly by altering the affinity of the ribosome for aminoacyl-tRNA, thus increasing their reactivity as acceptors for peptidyl transferase. This chain is Elongation factor P, found in Borreliella afzelii (strain PKo) (Borrelia afzelii).